Reading from the N-terminus, the 348-residue chain is MGLREKLAELREEGLQDIKQSEDLKRINEIRVKMLGKKGPITSVLRGMRDLSAEERPKVGQFANKVRDELSAAIEEKRAELEQAAMNAKLAAQTIDVTLPGTPVAQGQPHVIQQIIDQVVDLFVSMGYEVAVGDEVEQEVYNFEKLNLPKDHPARDMQDTFYVTPSVLMRTQTSPMQARMLEKHDFSQGPLKMISPGKVYRRDTDDATHSHQFHQIEGMVVGKNITMADLKGTLEAVAQNLFGDKLKVRLRPSYFPFTEPSVEADITCFNCLGKGCAICKQTGWIEVLGAGMVHPNVLKMSGVDPEEYGGFAFGLGPDRFAMLKYGVDDIRNFYQNDVRFLNQFDQKG.

A Mg(2+)-binding site is contributed by E259.

Belongs to the class-II aminoacyl-tRNA synthetase family. Phe-tRNA synthetase alpha subunit type 1 subfamily. As to quaternary structure, tetramer of two alpha and two beta subunits. It depends on Mg(2+) as a cofactor.

The protein resides in the cytoplasm. The enzyme catalyses tRNA(Phe) + L-phenylalanine + ATP = L-phenylalanyl-tRNA(Phe) + AMP + diphosphate + H(+). The protein is Phenylalanine--tRNA ligase alpha subunit of Limosilactobacillus reuteri (strain DSM 20016) (Lactobacillus reuteri).